Here is a 313-residue protein sequence, read N- to C-terminus: Type II restriction enzyme BsuMI component YdiR (313 aa).

Residues Phe289–Asn313 form a disordered region.

BsuMI restriction activity requires YdiR, YdiS and YdjA.

It catalyses the reaction Endonucleolytic cleavage of DNA to give specific double-stranded fragments with terminal 5'-phosphates.. Its function is as follows. A P subtype restriction enzyme that recognizes the double-stranded sequence 5'-CTCGAG-3'; the cleavage site is unknown. The sequence is that of Type II restriction enzyme BsuMI component YdiR (ydiR) from Bacillus subtilis (strain 168).